Consider the following 88-residue polypeptide: Cell division topological specificity factor (88 aa).

This sequence belongs to the MinE family.

Its function is as follows. Prevents the cell division inhibition by proteins MinC and MinD at internal division sites while permitting inhibition at polar sites. This ensures cell division at the proper site by restricting the formation of a division septum at the midpoint of the long axis of the cell. This chain is Cell division topological specificity factor, found in Aromatoleum aromaticum (strain DSM 19018 / LMG 30748 / EbN1) (Azoarcus sp. (strain EbN1)).